A 498-amino-acid polypeptide reads, in one-letter code: Lysine--tRNA ligase (498 aa).

Mg(2+)-binding residues include Glu407 and Glu414.

It belongs to the class-II aminoacyl-tRNA synthetase family. In terms of assembly, homodimer. Requires Mg(2+) as cofactor.

It localises to the cytoplasm. It catalyses the reaction tRNA(Lys) + L-lysine + ATP = L-lysyl-tRNA(Lys) + AMP + diphosphate. The sequence is that of Lysine--tRNA ligase (lysS) from Rhizobium meliloti (strain 1021) (Ensifer meliloti).